The primary structure comprises 608 residues: Zinc finger protein 652 (608 aa).

Phosphoserine is present on S57. A disordered region spans residues 61–232 (VLADTKMSKP…KRATKEAKAP (172 aa)). The span at 71 to 97 (HLHETEEQPYFREPRAVSDVHTVKEDR) shows a compositional bias: basic and acidic residues. Acidic residues-rich tracts occupy residues 98 to 108 (ENSDDTEEEEE) and 151 to 162 (EEDEEETEEEAT). A Phosphoserine modification is found at S100. A Phosphothreonine modification is found at T103. Residues 194-208 (AASAAAATTSPAPRT) are compositionally biased toward low complexity. Residues S196 and S203 each carry the phosphoserine modification. Residues 244 to 267 (LTCEKCPRVFNTRWYLEKHMNVTH) form a C2H2-type 1 zinc finger. The C2H2-type 2; degenerate zinc-finger motif lies at 271-293 (QICDKCGKKFVLESELSLHQQTD). 6 consecutive C2H2-type zinc fingers follow at residues 298 to 321 (IQCVSCNKSFKKLWSLHEHIKIVH), 328 to 350 (FACEICEKKFYTMAHVRKHMVAH), 356 to 378 (FTCETCGKSFKRSMSLKVHSLQH), 384 to 406 (FRCENCDERFQYKYQLRSHMSIH), 412 to 434 (FMCQWCGKDFNMKQYFDEHMKTH), and 440 to 462 (FICEICGKSFTSRPNMKRHRRTH). A C2H2-type 9; degenerate zinc finger spans residues 468 to 491 (YPCDVCGQRFRFSNMLKAHKEKCF). The interval 497–608 (VNVPPAVQIP…KNSAAPAQHH (112 aa)) is mediates interaction with CBFA2T3.

The protein belongs to the krueppel C2H2-type zinc-finger protein family. As to quaternary structure, interacts with CBFA2T3.

The protein localises to the nucleus. In terms of biological role, functions as a transcriptional repressor. This Mus musculus (Mouse) protein is Zinc finger protein 652 (Znf652).